Here is an 82-residue protein sequence, read N- to C-terminus: Acyl carrier protein (82 aa).

Positions 4-79 (PEMEERLRKI…DALNYLETHQ (76 aa)) constitute a Carrier domain. O-(pantetheine 4'-phosphoryl)serine is present on Ser-39.

Belongs to the acyl carrier protein (ACP) family. 4'-phosphopantetheine is transferred from CoA to a specific serine of apo-ACP by AcpS. This modification is essential for activity because fatty acids are bound in thioester linkage to the sulfhydryl of the prosthetic group.

It localises to the cytoplasm. It participates in lipid metabolism; fatty acid biosynthesis. In terms of biological role, carrier of the growing fatty acid chain in fatty acid biosynthesis. The chain is Acyl carrier protein from Chloroflexus aurantiacus (strain ATCC 29366 / DSM 635 / J-10-fl).